Here is a 367-residue protein sequence, read N- to C-terminus: Beta sliding clamp (367 aa).

This sequence belongs to the beta sliding clamp family. In terms of assembly, forms a ring-shaped head-to-tail homodimer around DNA which binds and tethers DNA polymerases and other proteins to the DNA. The DNA replisome complex has a single clamp-loading complex (3 tau and 1 each of delta, delta', psi and chi subunits) which binds 3 Pol III cores (1 core on the leading strand and 2 on the lagging strand) each with a beta sliding clamp dimer. Additional proteins in the replisome are other copies of gamma, psi and chi, Ssb, DNA helicase and RNA primase.

It localises to the cytoplasm. Functionally, confers DNA tethering and processivity to DNA polymerases and other proteins. Acts as a clamp, forming a ring around DNA (a reaction catalyzed by the clamp-loading complex) which diffuses in an ATP-independent manner freely and bidirectionally along dsDNA. Initially characterized for its ability to contact the catalytic subunit of DNA polymerase III (Pol III), a complex, multichain enzyme responsible for most of the replicative synthesis in bacteria; Pol III exhibits 3'-5' exonuclease proofreading activity. The beta chain is required for initiation of replication as well as for processivity of DNA replication. This is Beta sliding clamp (dnaN) from Pseudomonas aeruginosa (strain ATCC 15692 / DSM 22644 / CIP 104116 / JCM 14847 / LMG 12228 / 1C / PRS 101 / PAO1).